Consider the following 880-residue polypeptide: Pyruvate, phosphate dikinase (880 aa).

The tract at residues 1–348 is N-terminal; the sequence is MNKLIYYFGN…LYILQTRTAK (348 aa). An ATP-binding site is contributed by R97. The linker 1 stretch occupies residues 349–405; sequence RTAIAAINIAVQMVKEKLISKEQALMRIDPESLNQLLHTRIDYSKGLTSIAEGLPAS. The tract at residues 406–503 is central; that stretch reads PGAATGIVVF…VIKQGDIITI (98 aa). T458 is subject to Phosphothreonine; by PDRP1. H460 acts as the Tele-phosphohistidine intermediate in catalysis. The linker 2 stretch occupies residues 504-538; that stretch reads DGGSGKIFLGEMPLIQPTFSEESKLILDWADEISS. Residues 539 to 880 form a C-terminal region; it reads LKVRANAETV…AAQAKIKQGS (342 aa). Substrate is bound by residues R566, R622, E750, G771, T772, N773, and D774. Residue E750 coordinates Mg(2+). A Mg(2+)-binding site is contributed by D774. C836 (proton donor) is an active-site residue.

It belongs to the PEP-utilizing enzyme family. In terms of assembly, homodimer. Mg(2+) is required as a cofactor. Phosphorylation of Thr-458 in the dark inactivates the enzyme. Dephosphorylation upon light stimulation reactivates the enzyme.

The enzyme catalyses pyruvate + phosphate + ATP = phosphoenolpyruvate + AMP + diphosphate + H(+). Its activity is regulated as follows. Activated by light-induced dephosphorylation. Inhibited by dark-induced phosphorylation. Both reactions are catalyzed by PDRP1. Its function is as follows. Catalyzes the reversible phosphorylation of pyruvate and phosphate. In Rickettsia prowazekii (strain Madrid E), this protein is Pyruvate, phosphate dikinase (ppdK).